We begin with the raw amino-acid sequence, 149 residues long: Calmodulin (149 aa).

Ala2 is modified (N-acetylalanine). 4 EF-hand domains span residues 8-43 (EQIA…LGQN), 44-79 (PTEA…KMKD), 81-116 (DSEE…LGEK), and 117-149 (LTDE…MTSK). Residues Asp21, Asp23, Asp25, Thr27, Glu32, Asp57, Asp59, Asn61, Thr63, Glu68, Asp94, Asp96, Asn98, and Glu105 each coordinate Ca(2+). Lys116 carries the N6,N6,N6-trimethyllysine modification. Ca(2+) is bound by residues Asp130, Asp132, Asp134, Gln136, and Glu141.

It belongs to the calmodulin family.

Calmodulin mediates the control of a large number of enzymes, ion channels and other proteins by Ca(2+). Among the enzymes to be stimulated by the calmodulin-Ca(2+) complex are a number of protein kinases and phosphatases. This chain is Calmodulin, found in Metridium senile (Brown sea anemone).